A 126-amino-acid polypeptide reads, in one-letter code: Protein ApaG (126 aa).

The region spanning 2 to 126 (SQLTSSVRVD…FRLSIPGLLH (125 aa)) is the ApaG domain.

In Shewanella halifaxensis (strain HAW-EB4), this protein is Protein ApaG.